A 328-amino-acid chain; its full sequence is Malate dehydrogenase (328 aa).

Gly11 to Gly17 lines the NAD(+) pocket. Arg94 and Arg100 together coordinate substrate. NAD(+)-binding positions include Asn107, Gln114, and Val131 to Asn133. 2 residues coordinate substrate: Asn133 and Arg164. The active-site Proton acceptor is His189.

Belongs to the LDH/MDH superfamily. MDH type 2 family.

The enzyme catalyses (S)-malate + NAD(+) = oxaloacetate + NADH + H(+). Functionally, catalyzes the reversible oxidation of malate to oxaloacetate. The chain is Malate dehydrogenase from Xylella fastidiosa (strain M12).